The chain runs to 305 residues: Aspartate carbamoyltransferase catalytic subunit (305 aa).

Residues R58 and T59 each coordinate carbamoyl phosphate. K86 provides a ligand contact to L-aspartate. Residues R108, H136, and Q139 each coordinate carbamoyl phosphate. The L-aspartate site is built by R169 and R223. Residues G264 and P265 each coordinate carbamoyl phosphate.

It belongs to the aspartate/ornithine carbamoyltransferase superfamily. ATCase family. In terms of assembly, heterododecamer (2C3:3R2) of six catalytic PyrB chains organized as two trimers (C3), and six regulatory PyrI chains organized as three dimers (R2).

It carries out the reaction carbamoyl phosphate + L-aspartate = N-carbamoyl-L-aspartate + phosphate + H(+). It participates in pyrimidine metabolism; UMP biosynthesis via de novo pathway; (S)-dihydroorotate from bicarbonate: step 2/3. Catalyzes the condensation of carbamoyl phosphate and aspartate to form carbamoyl aspartate and inorganic phosphate, the committed step in the de novo pyrimidine nucleotide biosynthesis pathway. This is Aspartate carbamoyltransferase catalytic subunit from Syntrophobacter fumaroxidans (strain DSM 10017 / MPOB).